The primary structure comprises 1060 residues: Probable serine/threonine-protein kinase MARK-A (1060 aa).

Composition is skewed to basic and acidic residues over residues 1 to 11 (METLKEEEQFR) and 23 to 37 (HLKE…EREQ). Disordered stretches follow at residues 1–52 (METL…LQLQ) and 67–88 (NKIP…SISV). Composition is skewed to low complexity over residues 38 to 52 (QQQQ…LQLQ) and 68 to 88 (KIPS…SISV). The region spanning 109-361 (YLVIKTIGRG…MEEIINHPWL (253 aa)) is the Protein kinase domain. Residues 115 to 123 (IGRGQFGKV) and K139 contribute to the ATP site. D232 functions as the Proton acceptor in the catalytic mechanism. Positions 409–475 (INNINNTMAT…TTTTNATTTT (67 aa)) are enriched in low complexity. 4 disordered regions span residues 409-488 (INNI…NNEE), 560-701 (GENS…SPLC), 714-886 (LREK…PVHS), and 899-966 (DDKS…QEPR). Residues 488-528 (ELDQEIIEELVGLGFEREELCNSIRQNKYNDAASTYFLLQG) form the UBA domain. Residues 577-594 (TVDSPKSTNTPQYRSSNT) show a composition bias toward polar residues. Low complexity-rich tracts occupy residues 603 to 613 (QQQQQQQQQQQ), 620 to 637 (QQQN…NNHN), 650 to 699 (STTV…NPSP), and 720 to 760 (TTTN…TSPN). Polar residues predominate over residues 761–770 (LQPFSLASTA). 2 stretches are compositionally biased toward low complexity: residues 771–799 (NNNN…SLNS) and 811–831 (QQQQ…NSSS). Over residues 837-846 (QRQESRKLED) the composition is skewed to basic and acidic residues. Low complexity-rich tracts occupy residues 904-926 (NSSS…TNNT) and 935-965 (QNSN…QQEP). The KA1 domain occupies 1008–1057 (IECETEGVRFSIEICRLPRLSVNGLKFKRIGGSSWRYKSICKDLLSQMKL).

This sequence belongs to the protein kinase superfamily. CAMK Ser/Thr protein kinase family. SNF1 subfamily.

The enzyme catalyses L-seryl-[protein] + ATP = O-phospho-L-seryl-[protein] + ADP + H(+). It catalyses the reaction L-threonyl-[protein] + ATP = O-phospho-L-threonyl-[protein] + ADP + H(+). The sequence is that of Probable serine/threonine-protein kinase MARK-A (mrkA) from Dictyostelium discoideum (Social amoeba).